Reading from the N-terminus, the 341-residue chain is HTH-type transcriptional repressor PurR (341 aa).

Residues 2-56 form the HTH lacI-type domain; the sequence is ATIKDVAKRANVSTTTVSHVINKTRFVAEETRNAVWAAIKELHYSPSAVARSLKV. A DNA-binding region (H-T-H motif) is located at residues 4–23; that stretch reads IKDVAKRANVSTTTVSHVIN. Residues 48–56 mediate DNA binding; that stretch reads SAVARSLKV. Residues Y73, R190, T192, F221, and D275 each coordinate hypoxanthine.

As to quaternary structure, homodimer.

It functions in the pathway purine metabolism; purine nucleotide biosynthesis [regulation]. Functionally, is the main repressor of the genes involved in the de novo synthesis of purine nucleotides, regulating purB, purC, purEK, purF, purHD, purL, purMN and guaBA expression. In addition, it participates in the regulation or coregulation of genes involved in de novo pyrimidine nucleotide biosynthesis, salvage and uptake (pyrC, pyrD, carAB and codBA), and of several genes encoding enzymes necessary for nucleotide and polyamine biosynthesis (prsA, glyA, gcvTHP, speA, glnB). Binds to a 16-bp palindromic sequence located within the promoter region of pur regulon genes. The consensus binding sequence is 5'-ACGCAAACGTTTTCNT-3'. PurR is allosterically activated to bind its cognate DNA by binding the purine corepressors, hypoxanthine or guanine, thereby effecting transcription repression. In Escherichia coli (strain K12), this protein is HTH-type transcriptional repressor PurR (purR).